The following is a 90-amino-acid chain: UPF0213 protein Reut_B5558 (90 aa).

The 76-residue stretch at 5-80 (RQWYLYLLEC…KRMSSAQKIA (76 aa)) folds into the GIY-YIG domain.

It belongs to the UPF0213 family.

The protein is UPF0213 protein Reut_B5558 of Cupriavidus pinatubonensis (strain JMP 134 / LMG 1197) (Cupriavidus necator (strain JMP 134)).